The chain runs to 303 residues: Probable 5-dehydro-4-deoxyglucarate dehydratase (303 aa).

The protein belongs to the DapA family.

The enzyme catalyses 5-dehydro-4-deoxy-D-glucarate + H(+) = 2,5-dioxopentanoate + CO2 + H2O. The protein operates within carbohydrate acid metabolism; D-glucarate degradation; 2,5-dioxopentanoate from D-glucarate: step 2/2. This is Probable 5-dehydro-4-deoxyglucarate dehydratase from Pseudomonas syringae pv. syringae (strain B728a).